The chain runs to 508 residues: Photosystem II CP47 reaction center protein (508 aa).

Helical transmembrane passes span 21–36, 101–115, 140–156, 203–218, 237–252, and 457–472; these read SVHI…WAGS, IVFS…IWHW, GIHL…FGAF, IAAG…FHLS, VLSS…AFVV, and SFAL…HGAR.

This sequence belongs to the PsbB/PsbC family. PsbB subfamily. PSII is composed of 1 copy each of membrane proteins PsbA, PsbB, PsbC, PsbD, PsbE, PsbF, PsbH, PsbI, PsbJ, PsbK, PsbL, PsbM, PsbT, PsbX, PsbY, PsbZ, Psb30/Ycf12, at least 3 peripheral proteins of the oxygen-evolving complex and a large number of cofactors. It forms dimeric complexes. Binds multiple chlorophylls. PSII binds additional chlorophylls, carotenoids and specific lipids. serves as cofactor.

The protein resides in the plastid. It localises to the chloroplast thylakoid membrane. Functionally, one of the components of the core complex of photosystem II (PSII). It binds chlorophyll and helps catalyze the primary light-induced photochemical processes of PSII. PSII is a light-driven water:plastoquinone oxidoreductase, using light energy to abstract electrons from H(2)O, generating O(2) and a proton gradient subsequently used for ATP formation. The sequence is that of Photosystem II CP47 reaction center protein from Nasturtium officinale (Watercress).